A 303-amino-acid chain; its full sequence is Acetaldehyde dehydrogenase (303 aa).

C131 functions as the Acyl-thioester intermediate in the catalytic mechanism. Residues 162–170 (SVGPGTRAN) and N273 contribute to the NAD(+) site.

Belongs to the acetaldehyde dehydrogenase family.

The catalysed reaction is acetaldehyde + NAD(+) + CoA = acetyl-CoA + NADH + H(+). This chain is Acetaldehyde dehydrogenase, found in Marinomonas sp. (strain MWYL1).